The following is a 164-amino-acid chain: Endoribonuclease YbeY (164 aa).

Positions 111, 115, and 121 each coordinate Zn(2+). The interval 142-164 is disordered; sequence GYPDPYADDETETSPTVTTKDSE. Positions 154-164 are enriched in polar residues; the sequence is TSPTVTTKDSE.

This sequence belongs to the endoribonuclease YbeY family. Zn(2+) serves as cofactor.

Its subcellular location is the cytoplasm. Single strand-specific metallo-endoribonuclease involved in late-stage 70S ribosome quality control and in maturation of the 3' terminus of the 16S rRNA. The polypeptide is Endoribonuclease YbeY (Pseudomonas fluorescens (strain Pf0-1)).